A 70-amino-acid chain; its full sequence is DNA gyrase inhibitor YacG (70 aa).

Cys-9, Cys-12, Cys-28, and Cys-32 together coordinate Zn(2+). The segment at 44–70 (SRKIPGSSIDPESIVTTNNKQDNVDEQ) is disordered.

It belongs to the DNA gyrase inhibitor YacG family. Interacts with GyrB. Zn(2+) serves as cofactor.

Its function is as follows. Inhibits all the catalytic activities of DNA gyrase by preventing its interaction with DNA. Acts by binding directly to the C-terminal domain of GyrB, which probably disrupts DNA binding by the gyrase. The protein is DNA gyrase inhibitor YacG of Legionella pneumophila subsp. pneumophila (strain Philadelphia 1 / ATCC 33152 / DSM 7513).